A 259-amino-acid chain; its full sequence is 3-deoxy-manno-octulosonate cytidylyltransferase (259 aa).

This sequence belongs to the KdsB family.

It is found in the cytoplasm. The enzyme catalyses 3-deoxy-alpha-D-manno-oct-2-ulosonate + CTP = CMP-3-deoxy-beta-D-manno-octulosonate + diphosphate. It participates in nucleotide-sugar biosynthesis; CMP-3-deoxy-D-manno-octulosonate biosynthesis; CMP-3-deoxy-D-manno-octulosonate from 3-deoxy-D-manno-octulosonate and CTP: step 1/1. Its pathway is bacterial outer membrane biogenesis; lipopolysaccharide biosynthesis. Functionally, activates KDO (a required 8-carbon sugar) for incorporation into bacterial lipopolysaccharide in Gram-negative bacteria. The chain is 3-deoxy-manno-octulosonate cytidylyltransferase from Xanthomonas axonopodis pv. citri (strain 306).